We begin with the raw amino-acid sequence, 458 residues long: N-acetylgalactosamine kinase (458 aa).

Arginine 43, glutamate 49, histidine 50, and aspartate 52 together coordinate alpha-D-galactose. ATP contacts are provided by glycine 143, serine 145, and serine 146. Aspartate 190 contacts alpha-D-galactose. Residue aspartate 190 is the Proton acceptor of the active site. 2 residues coordinate ATP: asparagine 233 and lysine 234.

It belongs to the GHMP kinase family. GalK subfamily. In terms of assembly, monomer.

It catalyses the reaction N-acetyl-alpha-D-galactosamine + ATP = N-acetyl-alpha-D-galactosamine 1-phosphate + ADP + H(+). Functionally, acts on GalNAc. Also acts as a galactokinase when galactose is present at high concentrations. May be involved in a salvage pathway for the reutilization of free GalNAc derived from the degradation of complex carbohydrates. This Homo sapiens (Human) protein is N-acetylgalactosamine kinase (GALK2).